Reading from the N-terminus, the 166-residue chain is 2-C-methyl-D-erythritol 2,4-cyclodiphosphate synthase (166 aa).

A divalent metal cation-binding residues include Asp12 and His14. 4-CDP-2-C-methyl-D-erythritol 2-phosphate contacts are provided by residues 12 to 14 (DSH) and 38 to 39 (HS). Residue His46 coordinates a divalent metal cation. 4-CDP-2-C-methyl-D-erythritol 2-phosphate is bound by residues 60–62 (DIG), 65–69 (FPDTD), and Arg146.

The protein belongs to the IspF family. As to quaternary structure, homotrimer. Requires a divalent metal cation as cofactor.

It carries out the reaction 4-CDP-2-C-methyl-D-erythritol 2-phosphate = 2-C-methyl-D-erythritol 2,4-cyclic diphosphate + CMP. Its pathway is isoprenoid biosynthesis; isopentenyl diphosphate biosynthesis via DXP pathway; isopentenyl diphosphate from 1-deoxy-D-xylulose 5-phosphate: step 4/6. In terms of biological role, involved in the biosynthesis of isopentenyl diphosphate (IPP) and dimethylallyl diphosphate (DMAPP), two major building blocks of isoprenoid compounds. Catalyzes the conversion of 4-diphosphocytidyl-2-C-methyl-D-erythritol 2-phosphate (CDP-ME2P) to 2-C-methyl-D-erythritol 2,4-cyclodiphosphate (ME-CPP) with a corresponding release of cytidine 5-monophosphate (CMP). In Gemmatimonas aurantiaca (strain DSM 14586 / JCM 11422 / NBRC 100505 / T-27), this protein is 2-C-methyl-D-erythritol 2,4-cyclodiphosphate synthase.